The following is a 265-amino-acid chain: Protein Msed_2121 (265 aa).

The protein belongs to the CinA family.

The protein is Protein Msed_2121 of Metallosphaera sedula (strain ATCC 51363 / DSM 5348 / JCM 9185 / NBRC 15509 / TH2).